The following is a 34-amino-acid chain: uncharacterized protein (34 aa).

The segment at 1 to 34 is disordered; sequence MRLRRLFKQPSTRVLGVTNCPRQQGHQKRREQPD. The span at 25–34 shows a compositional bias: basic residues; that stretch reads GHQKRREQPD.

This is an uncharacterized protein from Schizosaccharomyces pombe (strain 972 / ATCC 24843) (Fission yeast).